Reading from the N-terminus, the 147-residue chain is Transcriptional regulator MraZ (147 aa).

SpoVT-AbrB domains are found at residues 5-52 and 81-124; these read SHAI…PETE and ATTL…SEEA.

This sequence belongs to the MraZ family. Forms oligomers.

Its subcellular location is the cytoplasm. It localises to the nucleoid. This Saccharophagus degradans (strain 2-40 / ATCC 43961 / DSM 17024) protein is Transcriptional regulator MraZ.